The sequence spans 203 residues: 3-isopropylmalate dehydratase small subunit (203 aa).

This sequence belongs to the LeuD family. LeuD type 1 subfamily. Heterodimer of LeuC and LeuD.

The enzyme catalyses (2R,3S)-3-isopropylmalate = (2S)-2-isopropylmalate. It functions in the pathway amino-acid biosynthesis; L-leucine biosynthesis; L-leucine from 3-methyl-2-oxobutanoate: step 2/4. In terms of biological role, catalyzes the isomerization between 2-isopropylmalate and 3-isopropylmalate, via the formation of 2-isopropylmaleate. In Rhodospirillum centenum (strain ATCC 51521 / SW), this protein is 3-isopropylmalate dehydratase small subunit.